We begin with the raw amino-acid sequence, 691 residues long: tRNA-dihydrouridine(47) synthase [NAD(P)(+)]-like (691 aa).

Ser-2 is modified (N-acetylserine). The segment at 55–94 (PPPPSRSVKQNDAADVRAPQSGLVQEKKSKRQLKRERREQ) is disordered. C3H1-type zinc fingers lie at residues 94–125 (QSTI…HDIE) and 138–163 (QCPF…HRDI). The tract at residues 259-286 (LETEEVRPMKKAKSEDQKNSKTGDVGGV) is disordered. The span at 262-279 (EEVRPMKKAKSEDQKNSK) shows a compositional bias: basic and acidic residues. FMN-binding positions include 344 to 346 (PLT) and Gln-398. Cys-429 (proton donor) is an active-site residue. FMN-binding positions include Lys-468, His-498, 531–533 (NGD), and 556–557 (AR).

The protein belongs to the Dus family. Dus3 subfamily. Requires FMN as cofactor.

The enzyme catalyses 5,6-dihydrouridine(47) in tRNA + NAD(+) = uridine(47) in tRNA + NADH + H(+). It catalyses the reaction 5,6-dihydrouridine(47) in tRNA + NADP(+) = uridine(47) in tRNA + NADPH + H(+). It carries out the reaction a 5,6-dihydrouridine in mRNA + NAD(+) = a uridine in mRNA + NADH + H(+). The catalysed reaction is a 5,6-dihydrouridine in mRNA + NADP(+) = a uridine in mRNA + NADPH + H(+). Catalyzes the synthesis of dihydrouridine, a modified base found in the D-loop of most tRNAs. Specifically modifies U47 in cytoplasmic tRNAs. Catalyzes the synthesis of dihydrouridine in some mRNAs, thereby affecting their translation. This is tRNA-dihydrouridine(47) synthase [NAD(P)(+)]-like from Arabidopsis thaliana (Mouse-ear cress).